We begin with the raw amino-acid sequence, 495 residues long: MLAYPTTSSPWPPRHHGAAAAPAARRHMAAAAARGKRRGAGAAAAEGADEAAEAADLVRFFLRRTSGGKERLVAVLDRHVKVVRTEHCFLLFEELGRRDGWLQCLEVFRWMQKQRWYVADNGIYSKLISVMGRKGQIRMAMWLFSQMRNSGCRPDTSVYNSLIGTHLHSRDKSKALAKALGYFEKMKTIDRCQPNIVTYNILLRAFAQAGDTKQLDILFKDLDESPVSPDIYTYNGVMDAYGKNGMITEMESVLVRMKSNQCRPDVITFNILIDSYGRKQAFDKMEQVFKSLLRSKEKPTHPTFNSMITNYGKARLREKAECVLDKMTEMGFKPNYVTQECLIMMYAYCDCVSRARQIFDELVSSQNNVHLSSVNAMLDAYCMNGLPMEADQLLDSVIKKGAVPSASTYKLLYKAYTKANDKKLIQKLLKRMNSQGIVPNKKFFLDALEAFGNTDKKPRTVPSKNSASKPDVESANNSGTDTSSKPNLSVWQVAA.

The segment at 1 to 24 (MLAYPTTSSPWPPRHHGAAAAPAA) is disordered. The N-terminal 29 residues, 1 to 29 (MLAYPTTSSPWPPRHHGAAAAPAARRHMA), are a transit peptide targeting the chloroplast. 9 PPR repeats span residues 120-154 (DNGIYSKLISVMGRKGQIRMAMWLFSQMRNSGCRP), 155-189 (DTSVYNSLIGTHLHSRDKSKALAKALGYFEKMKTI), 195-229 (NIVTYNILLRAFAQAGDTKQLDILFKDLDESPVSP), 230-264 (DIYTYNGVMDAYGKNGMITEMESVLVRMKSNQCRP), 265-299 (DVITFNILIDSYGRKQAFDKMEQVFKSLLRSKEKP), 300-334 (THPTFNSMITNYGKARLREKAECVLDKMTEMGFKP), 335-365 (NYVTQECLIMMYAYCDCVSRARQIFDELVSS), 370-404 (HLSSVNAMLDAYCMNGLPMEADQLLDSVIKKGAVP), and 405-439 (SASTYKLLYKAYTKANDKKLIQKLLKRMNSQGIVP). Residues 455 to 495 (DKKPRTVPSKNSASKPDVESANNSGTDTSSKPNLSVWQVAA) are disordered. Positions 462–495 (PSKNSASKPDVESANNSGTDTSSKPNLSVWQVAA) are enriched in polar residues.

Belongs to the PPR family. P subfamily.

It is found in the plastid. Its subcellular location is the chloroplast. In terms of biological role, involved in the biogenesis of the plastid translation machinery by promoting the splicing of group II introns in chloroplasts. The protein is Pentatricopeptide repeat-containing protein PPR5 homolog, chloroplastic of Oryza sativa subsp. japonica (Rice).